A 130-amino-acid chain; its full sequence is Small ribosomal subunit protein uS8 (130 aa).

The protein belongs to the universal ribosomal protein uS8 family. Part of the 30S ribosomal subunit. Contacts proteins S5 and S12.

In terms of biological role, one of the primary rRNA binding proteins, it binds directly to 16S rRNA central domain where it helps coordinate assembly of the platform of the 30S subunit. In Coxiella burnetii (strain Dugway 5J108-111), this protein is Small ribosomal subunit protein uS8.